The primary structure comprises 228 residues: PKHD-type hydroxylase YbiX (228 aa).

The 100-residue stretch at 78–177 folds into the Fe2OG dioxygenase domain; it reads TLSTPLFNRY…RVASFIWIQS (100 aa). Fe cation is bound by residues H96, D98, and H158. R168 contributes to the 2-oxoglutarate binding site.

Fe(2+) is required as a cofactor. The cofactor is L-ascorbate.

This chain is PKHD-type hydroxylase YbiX, found in Escherichia coli O157:H7.